The following is a 354-amino-acid chain: Probable protein phosphatase 2C 27 (354 aa).

The region spanning 54–319 (RSGDWSDIGG…DNLTAVMVSF (266 aa)) is the PPM-type phosphatase domain. Mn(2+) contacts are provided by Asp-98, Gly-99, Asp-267, and Asp-310.

This sequence belongs to the PP2C family. Mg(2+) is required as a cofactor. Requires Mn(2+) as cofactor.

It catalyses the reaction O-phospho-L-seryl-[protein] + H2O = L-seryl-[protein] + phosphate. The catalysed reaction is O-phospho-L-threonyl-[protein] + H2O = L-threonyl-[protein] + phosphate. The chain is Probable protein phosphatase 2C 27 from Oryza sativa subsp. japonica (Rice).